A 142-amino-acid chain; its full sequence is 3-hydroxyacyl-[acyl-carrier-protein] dehydratase FabZ (142 aa).

The active site involves His50.

The protein belongs to the thioester dehydratase family. FabZ subfamily.

The protein localises to the cytoplasm. The enzyme catalyses a (3R)-hydroxyacyl-[ACP] = a (2E)-enoyl-[ACP] + H2O. In terms of biological role, involved in unsaturated fatty acids biosynthesis. Catalyzes the dehydration of short chain beta-hydroxyacyl-ACPs and long chain saturated and unsaturated beta-hydroxyacyl-ACPs. This chain is 3-hydroxyacyl-[acyl-carrier-protein] dehydratase FabZ, found in Clostridium tetani (strain Massachusetts / E88).